The following is a 152-amino-acid chain: Single-stranded DNA-binding protein, mitochondrial (152 aa).

The transit peptide at 1–16 directs the protein to the mitochondrion; the sequence is MFRRPVLQVFRQFVRH. Residues 30–141 form the SSB domain; that stretch reads LNRVQLLGRV…IIAGKKLVVH (112 aa). 2 positions are modified to phosphoserine: S67 and S79. K113 is subject to N6-acetyllysine. K122 bears the N6-succinyllysine mark.

Homotetramer. Interacts with MPG/AAG, through inhibition of its glycosylase activity it potentially prevents formation of DNA breaks in ssDNA, ensuring that base removal primarily occurs in dsDNA. Interacts with POLDIP2. Interacts with PRIMPOL. Expressed in all the layers of the retina (at protein level).

It localises to the mitochondrion. The protein localises to the mitochondrion matrix. Its subcellular location is the mitochondrion nucleoid. In terms of biological role, binds preferentially and cooperatively to pyrimidine rich single-stranded DNA (ss-DNA). In vitro, required to maintain the copy number of mitochondrial DNA (mtDNA) and plays a crucial role during mtDNA replication by stimulating the activity of the replisome components POLG and TWNK at the replication fork. Promotes the activity of the gamma complex polymerase POLG, largely by organizing the template DNA and eliminating secondary structures to favor ss-DNA conformations that facilitate POLG activity. In addition it is able to promote the 5'-3' unwinding activity of the mtDNA helicase TWNK. May also function in mtDNA repair. This is Single-stranded DNA-binding protein, mitochondrial (Ssbp1) from Mus musculus (Mouse).